We begin with the raw amino-acid sequence, 456 residues long: F-box/FBD/LRR-repeat protein At3g52680 (456 aa).

The F-box domain maps to 20–73 (KDRISELPDGLLLKILSSLPTNIVVATSVLSKQWRSLWKLVPNLEFDSDDYESE). LRR repeat units lie at residues 74 to 100 (HYTF…RLKF), 102 to 127 (NFNP…VLDF), 152 to 179 (TLKL…HLEF), 180 to 205 (VRYK…RLYR), 225 to 252 (TIHD…LIEE), 270 to 295 (IAEV…LLNL), and 318 to 344 (TREA…KLTD). Positions 358 to 409 (KWNEPKDVPECLLSQLETFVWRRFDWGREEEKEIATYILKNGRRLKKATFST) constitute an FBD domain.

The protein is F-box/FBD/LRR-repeat protein At3g52680 of Arabidopsis thaliana (Mouse-ear cress).